We begin with the raw amino-acid sequence, 238 residues long: Major prion protein (238 aa).

The N-terminal stretch at 1 to 15 (MLVLFVATWSDLGLC) is a signal peptide. Residues 16–215 (KKRPKPGGWN…ESQAYYQRGS (200 aa)) form an interaction with GRB2, ERI3 and SYN1 region. The interval 18–93 (RPKPGGWNTG…WHKPSKPKTS (76 aa)) is disordered. Tandem repeats lie at residues 44 to 52 (PQGGGGWGQ), 53 to 60 (PHGGGWGQ), 61 to 68 (PHGGGWGQ), and 69 to 76 (PHGGGWGQ). The segment at 44 to 83 (PQGGGGWGQPHGGGWGQPHGGGWGQPHGGGWGQGGGTHNQ) is 4 X 8 AA tandem repeats of P-H-G-G-G-W-G-Q. Residues 45–80 (QGGGGWGQPHGGGWGQPHGGGWGQPHGGGWGQGGGT) show a composition bias toward gly residues. 11 residues coordinate Cu(2+): Gly47, Gly48, His54, Gly55, Gly56, His62, Gly63, Gly64, His70, Gly71, and Gly72. The segment covering 83–93 (QWHKPSKPKTS) has biased composition (basic residues). An intrachain disulfide couples Cys164 to Cys199. 2 N-linked (GlcNAc...) asparagine glycosylation sites follow: Asn166 and Asn182. Ser215 carries the GPI-anchor amidated serine lipid modification. Residues 216–238 (SIVLFSSPPVILLISFLIFLIVG) constitute a propeptide, removed in mature form.

This sequence belongs to the prion family. As to quaternary structure, monomer and homodimer. Has a tendency to aggregate into amyloid fibrils containing a cross-beta spine, formed by a steric zipper of superposed beta-strands. Soluble oligomers may represent an intermediate stage on the path to fibril formation. Copper binding may promote oligomerization. Interacts with GRB2, APP, ERI3/PRNPIP and SYN1. Mislocalized cytosolically exposed PrP interacts with MGRN1; this interaction alters MGRN1 subcellular location and causes lysosomal enlargement. Interacts with KIAA1191.

Its subcellular location is the cell membrane. It is found in the golgi apparatus. Its primary physiological function is unclear. Has cytoprotective activity against internal or environmental stresses. May play a role in neuronal development and synaptic plasticity. May be required for neuronal myelin sheath maintenance. May play a role in iron uptake and iron homeostasis. Soluble oligomers are toxic to cultured neuroblastoma cells and induce apoptosis (in vitro). Association with GPC1 (via its heparan sulfate chains) targets PRNP to lipid rafts. Also provides Cu(2+) or Zn(2+) for the ascorbate-mediated GPC1 deaminase degradation of its heparan sulfate side chains. The polypeptide is Major prion protein (PRNP) (Theropithecus gelada (Gelada baboon)).